We begin with the raw amino-acid sequence, 504 residues long: L-carnitine/gamma-butyrobetaine antiporter (504 aa).

The next 12 helical transmembrane spans lie at 10 to 30 (IEPK…WLTV), 51 to 71 (WGWA…WLVF), 92 to 112 (IFMM…SIEI), 143 to 163 (GPLP…FFFV), 195 to 215 (FYLV…TPLV), 231 to 251 (LDAI…ACGL), 263 to 283 (SYLS…SFIM), 316 to 336 (WTVF…IFLA), 347 to 367 (LCFG…TVLG), 398 to 418 (WAAL…CFIA), 446 to 466 (LLVR…LLAL), and 475 to 495 (AIIA…LSFI).

Belongs to the BCCT transporter (TC 2.A.15) family. CaiT subfamily. Homotrimer.

It localises to the cell inner membrane. It carries out the reaction 4-(trimethylamino)butanoate(in) + (R)-carnitine(out) = 4-(trimethylamino)butanoate(out) + (R)-carnitine(in). It participates in amine and polyamine metabolism; carnitine metabolism. Functionally, catalyzes the exchange of L-carnitine for gamma-butyrobetaine. The polypeptide is L-carnitine/gamma-butyrobetaine antiporter (Shigella flexneri serotype 5b (strain 8401)).